The sequence spans 250 residues: Pyridoxine 5'-phosphate synthase (250 aa).

A 3-amino-2-oxopropyl phosphate-binding site is contributed by Asn11. 1-deoxy-D-xylulose 5-phosphate is bound at residue 13 to 14; that stretch reads DH. Arg22 contacts 3-amino-2-oxopropyl phosphate. The Proton acceptor role is filled by His47. 1-deoxy-D-xylulose 5-phosphate contacts are provided by Arg49 and His54. Glu74 functions as the Proton acceptor in the catalytic mechanism. Thr104 is a 1-deoxy-D-xylulose 5-phosphate binding site. The Proton donor role is filled by His198. 3-amino-2-oxopropyl phosphate is bound by residues Gly199 and 220-221; that span reads GY.

Belongs to the PNP synthase family. Homooctamer; tetramer of dimers.

Its subcellular location is the cytoplasm. The enzyme catalyses 3-amino-2-oxopropyl phosphate + 1-deoxy-D-xylulose 5-phosphate = pyridoxine 5'-phosphate + phosphate + 2 H2O + H(+). It participates in cofactor biosynthesis; pyridoxine 5'-phosphate biosynthesis; pyridoxine 5'-phosphate from D-erythrose 4-phosphate: step 5/5. In terms of biological role, catalyzes the complicated ring closure reaction between the two acyclic compounds 1-deoxy-D-xylulose-5-phosphate (DXP) and 3-amino-2-oxopropyl phosphate (1-amino-acetone-3-phosphate or AAP) to form pyridoxine 5'-phosphate (PNP) and inorganic phosphate. This is Pyridoxine 5'-phosphate synthase from Bradyrhizobium diazoefficiens (strain JCM 10833 / BCRC 13528 / IAM 13628 / NBRC 14792 / USDA 110).